The following is a 252-amino-acid chain: Flap endonuclease Xni (252 aa).

Position 103 (aspartate 103) interacts with Mg(2+). A 5'-3' exonuclease domain is found at 159-248 (VLPEQLPDYW…LKGNLQQLRL (90 aa)). K(+) contacts are provided by leucine 170, alanine 171, proline 179, isoleucine 181, and isoleucine 184. Positions 183–188 (GIGPKT) are interaction with DNA.

It belongs to the Xni family. Mg(2+) is required as a cofactor. The cofactor is K(+).

In terms of biological role, has flap endonuclease activity. During DNA replication, flap endonucleases cleave the 5'-overhanging flap structure that is generated by displacement synthesis when DNA polymerase encounters the 5'-end of a downstream Okazaki fragment. This chain is Flap endonuclease Xni, found in Photorhabdus laumondii subsp. laumondii (strain DSM 15139 / CIP 105565 / TT01) (Photorhabdus luminescens subsp. laumondii).